A 541-amino-acid chain; its full sequence is MAKILKFDEDARRALERGVNKLADTVKVTIGPKGRNVVIDKKFGAPTITNDGVTIAREVEVEDPYENLGAQLVKEVATKTNDIAGDGTTTATVLAQALVREGLKNVAAGASPALLKKGIDAAVAAVSEDLLATARPIDEKSDIAAVAALSAQDQQVGELIAEAMDKVGKDGVITVEESNTFGLELDFTEGMAFDKGYLSPYFVTDQERMEAVLDDPYILINQGKISSIADLLPLLEKVIQANASKPLLIIAEDLEGEALSTLVVNKIRGTFNAVAVKAPGFGDRRKAMLQDMAVLTGATVISEEVGLKLDQVGLEVLGTARRITVTKDDTTIVDGAGKRDEVQGRIAQIKAEIENTDSDWDREKLQERLAKLAGGVCVIKVGAATEVELKERKHRLEDAISATRAAVEEGIVSGGGSALVHAVKVLEGNLGKTGDEATGVAVVRRAAVEPLRWIAENAGLEGYVITSKVADLDKGQGFNAATGEYGDLVKAGVIDPVKVTRSALENAASIASLLLTTETLVVEKKEEEEPAAGGHSHGHSH.

ATP-binding positions include 29–32 (TIGP), 86–90 (DGTTT), Gly415, 479–481 (NAA), and Asp495.

Belongs to the chaperonin (HSP60) family. Forms a cylinder of 14 subunits composed of two heptameric rings stacked back-to-back. Interacts with the co-chaperonin GroES.

The protein localises to the cytoplasm. The enzyme catalyses ATP + H2O + a folded polypeptide = ADP + phosphate + an unfolded polypeptide.. Together with its co-chaperonin GroES, plays an essential role in assisting protein folding. The GroEL-GroES system forms a nano-cage that allows encapsulation of the non-native substrate proteins and provides a physical environment optimized to promote and accelerate protein folding. This Streptomyces coelicolor (strain ATCC BAA-471 / A3(2) / M145) protein is Chaperonin GroEL 1.